Here is a 70-residue protein sequence, read N- to C-terminus: TEFGSELKSFPEVVGKTVDQAREYFTLHYPQYDVYFLPEGSPVTLDLRYNRVRVFYNPGTNVVNHVPHVG.

This sequence belongs to the protease inhibitor I13 (potato type I serine protease inhibitor) family.

Inhibits both elastase and cathepsin G. The protein is Eglin C of Hirudo medicinalis (Medicinal leech).